The sequence spans 425 residues: Serine/threonine-protein kinase VRK1 (425 aa).

In terms of domain architecture, Protein kinase spans 38-329; it reads WKLGSAVGQG…KLRGILQQGL (292 aa). ATP contacts are provided by residues 44–52 and K72; that span reads VGQGGFGLL. Catalysis depends on D178, which acts as the Proton acceptor. The disordered stretch occupies residues 343 to 425; sequence GVATNSTSLP…KSRGRPKKNS (83 aa). A compositionally biased stretch (basic residues) spans 415 to 425; it reads KKSRGRPKKNS.

It belongs to the protein kinase superfamily. CK1 Ser/Thr protein kinase family. VRK subfamily.

The protein resides in the nucleus. It is found in the cytoplasm. It localises to the cajal body. The catalysed reaction is L-seryl-[protein] + ATP = O-phospho-L-seryl-[protein] + ADP + H(+). It catalyses the reaction L-threonyl-[protein] + ATP = O-phospho-L-threonyl-[protein] + ADP + H(+). Serine/threonine kinase involved in the regulation of key cellular processes including the cell cycle, nuclear condensation, transcription regulation, and DNA damage response. Controls chromatin organization and remodeling by mediating phosphorylation of histone H3 on 'Thr-4' and histone H2AX (H2aXT4ph). It also phosphorylates KAT5 in response to DNA damage, promoting KAT5 association with chromatin and histone acetyltransferase activity. Is involved in the regulation of cell cycle progression of neural progenitors, and is required for proper cortical neuronal migration. Is involved in neurite elongation and branching in motor neurons, and has an essential role in Cajal bodies assembly, acting through COIL phosphorylation and the control of coilin degradation. Involved in Golgi disassembly during the cell cycle: following phosphorylation by PLK3 during mitosis, it is required to induce Golgi fragmentation. Phosphorylates BANF1: disrupts its ability to bind DNA, reduces its binding to LEM domain-containing proteins and causes its relocalization from the nucleus to the cytoplasm. Phosphorylates TP53BP1 and p53/TP53 on 'Thr-18', preventing the interaction between p53/TP53 and MDM2. Phosphorylates ATF2 which activates its transcriptional activity. Phosphorylates JUN. The polypeptide is Serine/threonine-protein kinase VRK1 (vrk1) (Danio rerio (Zebrafish)).